The following is a 446-amino-acid chain: NADH oxidase (446 aa).

Residues 7 to 11, E32, C42, V79, 110 to 113, K132, and Y157 each bind FAD; these read GCTHA and TTGS. H10 (proton acceptor) is an active-site residue. The active-site Redox-active is C42. Position 42 is a cysteine sulfinic acid (-SO2H) (C42). Residues 150–165, D177, Y186, and G243 contribute to the NAD(+) site; that span reads VVVVGGGYIGIELVEA. FAD is bound by residues 271 to 281, L298, A299, and T300; that span reads TSNPDIFAAGD. Residue G328 coordinates NAD(+). F424 lines the FAD pocket.

The protein belongs to the class-III pyridine nucleotide-disulfide oxidoreductase family. As to quaternary structure, homodimer. Requires FAD as cofactor. In terms of processing, the N-terminus is blocked.

The enzyme catalyses 2 NADH + O2 + 2 H(+) = 2 NAD(+) + 2 H2O. Its function is as follows. Catalyzes the four-electron reduction of molecular oxygen to water. This Enterococcus faecalis (strain ATCC 700802 / V583) protein is NADH oxidase (nox).